A 145-amino-acid chain; its full sequence is Large ribosomal subunit protein bL17 (145 aa).

It belongs to the bacterial ribosomal protein bL17 family. Part of the 50S ribosomal subunit. Contacts protein L32.

The sequence is that of Large ribosomal subunit protein bL17 from Orientia tsutsugamushi (strain Boryong) (Rickettsia tsutsugamushi).